Reading from the N-terminus, the 171-residue chain is Ribosome maturation factor RimM (171 aa).

The region spanning 96 to 169 is the PRC barrel domain; that stretch reads EGEFFIADMI…KMIIDPIKGM (74 aa).

Belongs to the RimM family. In terms of assembly, binds ribosomal protein uS19.

It localises to the cytoplasm. In terms of biological role, an accessory protein needed during the final step in the assembly of 30S ribosomal subunit, possibly for assembly of the head region. Essential for efficient processing of 16S rRNA. May be needed both before and after RbfA during the maturation of 16S rRNA. It has affinity for free ribosomal 30S subunits but not for 70S ribosomes. In Clostridioides difficile (strain 630) (Peptoclostridium difficile), this protein is Ribosome maturation factor RimM.